We begin with the raw amino-acid sequence, 1538 residues long: Phenolphthiocerol/phthiocerol polyketide synthase subunit B (1538 aa).

The region spanning 33–455 (AEPVAVVGIG…GTNAHVIIEQ (423 aa)) is the Ketosynthase family 3 (KS3) domain. Catalysis depends on for beta-ketoacyl synthase activity residues C205, H340, and H377. Positions 553–882 (DGSPGPGTVF…TNLYTADIAH (330 aa)) are acyltransferase. The active-site For malonyltransferase activity is S649. 1153–1196 (SQLVIGATGNIGPHLIRQLARMGAKTIVAMARKPGALDELTQCL) contributes to the NADP(+) binding site. A beta-ketoacyl reductase region spans residues 1153-1328 (SQLVIGATGN…TVVDWGLWKS (176 aa)). Positions 1423–1498 (DMLFDHVGAL…SLTDYLATVL (76 aa)) constitute a Carrier domain. Position 1458 is an O-(pantetheine 4'-phosphoryl)serine (S1458).

The cofactor is NADP(+). Requires pantetheine 4'-phosphate as cofactor.

The enzyme catalyses icosanoyl-[(phenol)carboxyphthiodiolenone synthase] + 2 (S)-methylmalonyl-CoA + 3 malonyl-CoA + 5 NADPH + 10 H(+) = C32-carboxyphthiodiolenone-[(phenol)carboxyphthiodiolenone synthase] + 5 CO2 + 5 NADP(+) + 5 CoA + 2 H2O. The catalysed reaction is docosanoyl-[(phenol)carboxyphthiodiolenone synthase] + 2 (S)-methylmalonyl-CoA + 3 malonyl-CoA + 5 NADPH + 10 H(+) = C34-carboxyphthiodiolenone-[(phenol)carboxyphthiodiolenone synthase] + 5 CO2 + 5 NADP(+) + 5 CoA + 2 H2O. It carries out the reaction 17-(4-hydroxyphenyl)heptadecanoyl-[(phenol)carboxyphthiodiolenone synthase] + 2 (S)-methylmalonyl-CoA + 3 malonyl-CoA + 5 NADPH + 10 H(+) = C35-(phenol)carboxyphthiodiolenone-[(phenol)carboxyphthiodiolenone synthase] + 5 CO2 + 5 NADP(+) + 5 CoA + 2 H2O. It catalyses the reaction 19-(4-hydroxyphenyl)nonadecanoyl-[(phenol)carboxyphthiodiolenone synthase] + 2 (S)-methylmalonyl-CoA + 3 malonyl-CoA + 5 NADPH + 10 H(+) = C37-(phenol)carboxyphthiodiolenone-[(phenol)carboxyphthiodiolenone synthase] + 5 CO2 + 5 NADP(+) + 5 CoA + 2 H2O. It participates in lipid metabolism; fatty acid biosynthesis. In terms of biological role, part of the PpsABCDE complex involved in the biosynthesis of the lipid core common to phthiocerols and phenolphthiocerols by successive additions of malonyl-CoA or methylmalonyl-CoA extender units. PpsA can accept as substrate the activated forms of either icosanoyl (C20), docosanoyl (C22) or lignoceroyl (C24) groups from FadD26, or a (4-hydroxyphenyl)-C17 or (4-hydroxyphenyl)-C19 fatty acyl from FadD29. PpsA initiates the biosynthesis and extends its substrate using a malonyl-CoA extender unit. The PpsB and PpsC proteins add the second and third malonyl-CoA extender units. PpsD adds an (R)-methylmalonyl unit and PpsE adds a second (R)-methylmalonyl unit. The incorporation of the methylmalonyl units results in formation of two branched methyl groups in the elongated product. The sequence is that of Phenolphthiocerol/phthiocerol polyketide synthase subunit B (ppsB) from Mycobacterium bovis (strain ATCC BAA-935 / AF2122/97).